The sequence spans 499 residues: Type-1 glutamine synthetase 1 (499 aa).

Positions Pro-50–Asn-146 constitute a GS beta-grasp domain. A GS catalytic domain is found at Pro-158–Phe-499.

The protein belongs to the glutamine synthetase family.

The enzyme catalyses L-glutamate + NH4(+) + ATP = L-glutamine + ADP + phosphate + H(+). The chain is Type-1 glutamine synthetase 1 (glnA1) from Dictyostelium discoideum (Social amoeba).